A 290-amino-acid polypeptide reads, in one-letter code: Cilia- and flagella-associated protein 298 (290 aa).

Phosphotyrosine is present on Tyr264.

It belongs to the CFAP298 family. As to quaternary structure, interacts with ZMYND10.

It localises to the cytoplasm. The protein localises to the cytoskeleton. Its subcellular location is the cilium basal body. Plays a role in motile cilium function, possibly by acting on outer dynein arm assembly. Seems to be important for initiation rather than maintenance of cilium motility. Required for correct positioning of the cilium at the apical cell surface, suggesting an additional role in the planar cell polarity (PCP) pathway. May suppress canonical Wnt signaling activity. This chain is Cilia- and flagella-associated protein 298, found in Homo sapiens (Human).